Reading from the N-terminus, the 517-residue chain is MMDSSILQTLAVLYVLYLLGLIIYRLYFSPLAKFPGPKLAACSKWYEFYYDVILRGQFTFQIQRMHQKYGPIVRINPFELHIQDSTFWDELYTKNKEYERYAWMSGRFGANTTTSSTVKSDLHATRRAPLNPMFSKRSITEFEPIVHEKVGLLSKRLAEYAKNGEVLEMNSAFNAFAGDVISSYCFGFSFDQLKSSGFKDNFHAAYEAVRKFAHFGLQFPVVFIILGLSPRAMLKLVVPNIYKMFVLQKDLQSKISAIIQDHQGNPEDIDSKSSLNTHSHPTIFDELLRSKLPPSEKTVRRLGSEAQQMIGAGVETVAWALTTTVFYLLSDHACLDKLRAELKAAIPDPANLPSSTALEKLPYLSACVKEGIRLSTGVSVRLPRVSPHKPIVYGGWVIPPIVPVSMTTLDVLRDPEVFTSPNNFIPERWLGSPKVANTGESLAKYFVPFGKGPRMCIGINLAYVEMHLTLAMLFRRFTFELYETDVSDVEIKHDFMVPQPKLSTKGVRAKVTGLVVE.

A helical transmembrane segment spans residues 4 to 24; it reads SSILQTLAVLYVLYLLGLIIY. An N-linked (GlcNAc...) asparagine glycan is attached at N111. A helical transmembrane segment spans residues 219 to 239; the sequence is FPVVFIILGLSPRAMLKLVVP. C456 contacts heme.

The protein belongs to the cytochrome P450 family. The cofactor is heme.

It is found in the membrane. Its pathway is antibiotic biosynthesis. Its function is as follows. Cytochrome P450 monooxygenase; part of the gene cluster that mediates the biosynthesis of sordarin and hypoxysordarin, glycoside antibiotics with a unique tetracyclic diterpene aglycone structure. First, the geranylgeranyl diphosphate synthase sdnC constructs GGDP from farnesyl diphosphate and isopentenyl diphosphate. The diterpene cyclase sdnA then catalyzes the cyclization of GGDP to afford cycloaraneosene. Cycloaraneosene is then hydroxylated four times by the putative cytochrome P450 monooxygenases sdnB, sdnE, sdnF and sdnH to give a hydroxylated cycloaraneosene derivative such as cycloaraneosene-8,9,13,19-tetraol. Although the order of the hydroxylations is unclear, at least C8, C9 and C13 of the cycloaraneosene skeleton are hydroxylated before the sordaricin formation. Dehydration of the 13-hydroxy group of the hydroxylated cycloaraneosene derivative might be catalyzed by an unassigned hypothetical protein such as sdnG and sdnP to construct the cyclopentadiene moiety. The FAD-dependent oxidoreductase sdnN is proposed to catalyze the oxidation at C9 of the hydroxylated cycloaraneosene derivative and also catalyze the Baeyer-Villiger oxidation to give the lactone intermediate. The presumed lactone intermediate would be hydrolyzed to give an acrolein moiety and a carboxylate moiety. Then, [4+2]cycloaddition would occur between the acrolein moiety and the cyclopentadiene moiety to give sordaricin. SdnN might also be involved in the [4+2]cycloaddition after the hypothesized oxidation to accommodate the oxidized product and prompt the [4+2]cycloaddition. GDP-6-deoxy-D-altrose may be biosynthesized from GDP-D-mannose by the putative GDP-mannose-4,6-dehydratase sdnI and the short-chain dehydrogenase sdnK. The glycosyltransferase sdnJ catalyzes the attachment of 6-deoxy-D-altrose onto the 19-hydroxy group of sordaricin to give 4'-O-demethylsordarin. The methyltransferase sdnD would complete the biosynthesis of sordarin. Sordarin can be further modified into hypoxysordarin. The unique acyl chain at the 3'-hydroxy group of hypoxysordarin would be constructed by an iterative type I PKS sdnO and the trans-acting polyketide methyltransferase sdnL. SdnL would be responsible for the introduction of an alpha-methyl group of the polyketide chain. Alternatively, the beta-lactamase-like protein sdnR might be responsible for the cleavage and transfer of the polyketide chain from the PKS sdnO to sordarin. Two putative cytochrome P450 monooxygenases, sdnQ and sdnT, might catalyze the epoxidations of the polyketide chain to complete the biosynthesis of hypoxysordarin. Transcriptional regulators sdnM and sdnS are presumably encoded for the transcriptional regulation of the expression of the sdn gene cluster. The sequence is that of Cytochrome P450 monooxygenase sdnE from Sordaria araneosa (Pleurage araneosa).